Consider the following 395-residue polypeptide: S-adenosylmethionine synthase (395 aa).

Residue H18 coordinates ATP. D20 provides a ligand contact to Mg(2+). E46 provides a ligand contact to K(+). E59 and Q103 together coordinate L-methionine. The tract at residues 103 to 113 (QSADIAVGVDS) is flexible loop. ATP-binding positions include 170-172 (DAK), D244, 250-251 (RK), A267, and K271. D244 lines the L-methionine pocket. Residue K275 coordinates L-methionine.

This sequence belongs to the AdoMet synthase family. Homotetramer; dimer of dimers. Requires Mg(2+) as cofactor. K(+) serves as cofactor.

Its subcellular location is the cytoplasm. It catalyses the reaction L-methionine + ATP + H2O = S-adenosyl-L-methionine + phosphate + diphosphate. It functions in the pathway amino-acid biosynthesis; S-adenosyl-L-methionine biosynthesis; S-adenosyl-L-methionine from L-methionine: step 1/1. Catalyzes the formation of S-adenosylmethionine (AdoMet) from methionine and ATP. The overall synthetic reaction is composed of two sequential steps, AdoMet formation and the subsequent tripolyphosphate hydrolysis which occurs prior to release of AdoMet from the enzyme. In Gluconacetobacter diazotrophicus (strain ATCC 49037 / DSM 5601 / CCUG 37298 / CIP 103539 / LMG 7603 / PAl5), this protein is S-adenosylmethionine synthase.